The sequence spans 569 residues: Small ribosomal subunit protein bS1 (569 aa).

S1 motif domains follow at residues Gly52–Glu116, Gly134–Arg199, Gly220–Lys288, Gly305–Lys375, Gly392–Lys462, and Gly479–Lys548.

Belongs to the bacterial ribosomal protein bS1 family.

Its function is as follows. Binds mRNA; thus facilitating recognition of the initiation point. It is needed to translate mRNA with a short Shine-Dalgarno (SD) purine-rich sequence. The polypeptide is Small ribosomal subunit protein bS1 (rpsA) (Chlamydia trachomatis serovar D (strain ATCC VR-885 / DSM 19411 / UW-3/Cx)).